Consider the following 196-residue polypeptide: Holliday junction branch migration complex subunit RuvA (196 aa).

The interval 1-63 is domain I; the sequence is MIEYIKGEIV…EDAHLLFGFA (63 aa). Residues 64–142 form a domain II region; that stretch reads EKIERELFLL…PMESMAGNLP (79 aa). The flexible linker stretch occupies residues 142-146; the sequence is PEASV. The tract at residues 147 to 196 is domain III; it reads SNGAVTEEAVAALVMLGFQKAASQKAVSAILKGSPTLAVEQVIKTALRML.

Belongs to the RuvA family. Homotetramer. Forms an RuvA(8)-RuvB(12)-Holliday junction (HJ) complex. HJ DNA is sandwiched between 2 RuvA tetramers; dsDNA enters through RuvA and exits via RuvB. An RuvB hexamer assembles on each DNA strand where it exits the tetramer. Each RuvB hexamer is contacted by two RuvA subunits (via domain III) on 2 adjacent RuvB subunits; this complex drives branch migration. In the full resolvosome a probable DNA-RuvA(4)-RuvB(12)-RuvC(2) complex forms which resolves the HJ.

It localises to the cytoplasm. The RuvA-RuvB-RuvC complex processes Holliday junction (HJ) DNA during genetic recombination and DNA repair, while the RuvA-RuvB complex plays an important role in the rescue of blocked DNA replication forks via replication fork reversal (RFR). RuvA specifically binds to HJ cruciform DNA, conferring on it an open structure. The RuvB hexamer acts as an ATP-dependent pump, pulling dsDNA into and through the RuvAB complex. HJ branch migration allows RuvC to scan DNA until it finds its consensus sequence, where it cleaves and resolves the cruciform DNA. This Parabacteroides distasonis (strain ATCC 8503 / DSM 20701 / CIP 104284 / JCM 5825 / NCTC 11152) protein is Holliday junction branch migration complex subunit RuvA.